The primary structure comprises 276 residues: Fructoselysine 3-epimerase (276 aa).

E148 serves as the catalytic Proton donor/acceptor. A divalent metal cation-binding residues include E148, D181, H207, and E247. The Proton donor/acceptor role is filled by E247.

The protein belongs to the FrlC family. As to quaternary structure, homooctamer. A divalent metal cation is required as a cofactor.

The catalysed reaction is N(6)-(D-psicosyl)-L-lysine = N(6)-(D-fructosyl)-L-lysine. In terms of biological role, catalyzes the reversible interconversion of fructoselysine with its C-3 epimer, psicoselysine. May allow S.flexneri to utilize psicoselysine for growth. The polypeptide is Fructoselysine 3-epimerase (frlC) (Shigella flexneri).